Reading from the N-terminus, the 82-residue chain is Large ribosomal subunit protein bL31 (82 aa).

4 residues coordinate Zn(2+): Cys-16, Cys-18, Cys-37, and Cys-40.

It belongs to the bacterial ribosomal protein bL31 family. Type A subfamily. Part of the 50S ribosomal subunit. It depends on Zn(2+) as a cofactor.

Its function is as follows. Binds the 23S rRNA. In Blochmanniella pennsylvanica (strain BPEN), this protein is Large ribosomal subunit protein bL31.